A 740-amino-acid chain; its full sequence is DNA (cytosine-5)-methyltransferase 3C (740 aa).

2 disordered regions span residues 75-99 and 248-312; these read LTGDGDEDRDGEVGGSSGSGTPVMP and FKPT…DVTN. In terms of domain architecture, ADD spans 309–441; sequence DVTNNKGNLE…LQDFFTTDPD (133 aa). A GATA-type; atypical zinc finger spans residues 320 to 350; it reads HCLSCGRKDPVSFHPLFEGGLCQSCRDRFLE. A PHD-type; atypical zinc finger spans residues 361–417; that stretch reads QSYCTVCCEGRELLLCSNTSCCRCFCVECLEVLVGAGTAEDVKLQEPWSCYMCLPQR. The SAM-dependent MTase C5-type domain maps to 462–740; it reads IRVLSLFDGI…APLKDHFACE (279 aa). Positions 471, 473, 492, 514, and 515 each coordinate S-adenosyl-L-methionine. C538 is an active-site residue. R719 and W721 together coordinate S-adenosyl-L-methionine.

The protein belongs to the class I-like SAM-binding methyltransferase superfamily. C5-methyltransferase family. In terms of assembly, homodimer. Interacts with DNMT3L. Interacts with SPOCD1; recruiting Dnmt3C to transposons. In terms of tissue distribution, specifically expressed in testis.

The protein resides in the nucleus. It carries out the reaction a 2'-deoxycytidine in DNA + S-adenosyl-L-methionine = a 5-methyl-2'-deoxycytidine in DNA + S-adenosyl-L-homocysteine + H(+). In terms of biological role, DNA methyltransferase that specifically methylates the promoters of evolutionarily young retrotransposons in the male germline. De novo methylation and subsequent repression of transposable elements prevents their mobilization, which is essential for germline integrity. Compared to Dnmt3a and Dnmt3b, shows lower DNA methyltransferase efficiency. The protein is DNA (cytosine-5)-methyltransferase 3C of Mus musculus (Mouse).